Here is a 144-residue protein sequence, read N- to C-terminus: Large ribosomal subunit protein uL13 (144 aa).

Belongs to the universal ribosomal protein uL13 family. In terms of assembly, part of the 50S ribosomal subunit.

Its function is as follows. This protein is one of the early assembly proteins of the 50S ribosomal subunit, although it is not seen to bind rRNA by itself. It is important during the early stages of 50S assembly. In Natronomonas pharaonis (strain ATCC 35678 / DSM 2160 / CIP 103997 / JCM 8858 / NBRC 14720 / NCIMB 2260 / Gabara) (Halobacterium pharaonis), this protein is Large ribosomal subunit protein uL13.